Consider the following 49-residue polypeptide: Beta-toxin Rc1 (49 aa).

3 disulfide bridges follow: cysteine 15-cysteine 31, cysteine 22-cysteine 40, and cysteine 26-cysteine 42.

This sequence belongs to the long (4 C-C) scorpion toxin superfamily. Sodium channel inhibitor family. Beta subfamily. As to expression, expressed by the venom gland.

The protein localises to the secreted. Beta toxins bind voltage-independently at site-4 of sodium channels (Nav) and shift the voltage of activation toward more negative potentials thereby affecting sodium channel activation and promoting spontaneous and repetitive firing. This toxin acts on X.laevis Nav1.6/SCN8A and insect BgNav1 channels, and also displays a small but significant effect on X.laevis Nav1.4/SCN4A channels. In mice induces nociception (licking and lifting behaviors) during the first 15 minutes after injection, and increases the release of TNF-alpha in J774.1 cells. The protein is Beta-toxin Rc1 of Rhopalurus crassicauda (Scorpion).